Here is a 195-residue protein sequence, read N- to C-terminus: Probable GTP-binding protein EngB (195 aa).

An EngB-type G domain is found at 22-195 (GLPEIALAGR…WGAIKKMINR (174 aa)). Residues 30–37 (GRSNVGKS), 57–61 (GKTQT), 75–78 (DVPG), 142–145 (TKAD), and 174–176 (FSS) each bind GTP. Mg(2+)-binding residues include serine 37 and threonine 59.

It belongs to the TRAFAC class TrmE-Era-EngA-EngB-Septin-like GTPase superfamily. EngB GTPase family. The cofactor is Mg(2+).

Its function is as follows. Necessary for normal cell division and for the maintenance of normal septation. In terms of biological role, binds GTP and GDP. This Bacillus subtilis (strain 168) protein is Probable GTP-binding protein EngB.